The chain runs to 576 residues: Arginine--tRNA ligase (576 aa).

Positions 126 to 136 (ANPTGPMHIGH) match the 'HIGH' region motif.

This sequence belongs to the class-I aminoacyl-tRNA synthetase family. Monomer.

It localises to the cytoplasm. The catalysed reaction is tRNA(Arg) + L-arginine + ATP = L-arginyl-tRNA(Arg) + AMP + diphosphate. The sequence is that of Arginine--tRNA ligase from Rickettsia canadensis (strain McKiel).